Here is a 357-residue protein sequence, read N- to C-terminus: Cytochrome c peroxidase, mitochondrial (357 aa).

The N-terminal 23 residues, 1 to 23, are a transit peptide targeting the mitochondrion; that stretch reads MSATALRIAPIASRTFQRRLGYL. His116 functions as the Proton acceptor in the catalytic mechanism. A disordered region spans residues 189–212; that stretch reads PWRSGRTDLPEDMTPDNGRLPDGD. Residue His239 coordinates heme b. The active-site Tryptophan radical intermediate is Trp255.

This sequence belongs to the peroxidase family. Cytochrome c peroxidase subfamily. In terms of assembly, forms a one-to-one complex with cytochrome c. Heme b serves as cofactor.

Its subcellular location is the mitochondrion matrix. It localises to the mitochondrion intermembrane space. The enzyme catalyses 2 Fe(II)-[cytochrome c] + H2O2 + 2 H(+) = 2 Fe(III)-[cytochrome c] + 2 H2O. In terms of biological role, destroys radicals which are normally produced within the cells and which are toxic to biological systems. The protein is Cytochrome c peroxidase, mitochondrial of Candida glabrata (strain ATCC 2001 / BCRC 20586 / JCM 3761 / NBRC 0622 / NRRL Y-65 / CBS 138) (Yeast).